A 458-amino-acid chain; its full sequence is UDP-N-acetylmuramoylalanine--D-glutamate ligase (458 aa).

124 to 130 (GSDGKTT) serves as a coordination point for ATP.

It belongs to the MurCDEF family.

The protein resides in the cytoplasm. It carries out the reaction UDP-N-acetyl-alpha-D-muramoyl-L-alanine + D-glutamate + ATP = UDP-N-acetyl-alpha-D-muramoyl-L-alanyl-D-glutamate + ADP + phosphate + H(+). The protein operates within cell wall biogenesis; peptidoglycan biosynthesis. In terms of biological role, cell wall formation. Catalyzes the addition of glutamate to the nucleotide precursor UDP-N-acetylmuramoyl-L-alanine (UMA). This chain is UDP-N-acetylmuramoylalanine--D-glutamate ligase, found in Clostridium kluyveri (strain NBRC 12016).